Consider the following 252-residue polypeptide: 5'-nucleotidase SurE (252 aa).

A divalent metal cation-binding residues include aspartate 8, aspartate 9, serine 39, and asparagine 91.

Belongs to the SurE nucleotidase family. Requires a divalent metal cation as cofactor.

The protein localises to the cytoplasm. The enzyme catalyses a ribonucleoside 5'-phosphate + H2O = a ribonucleoside + phosphate. Functionally, nucleotidase that shows phosphatase activity on nucleoside 5'-monophosphates. The chain is 5'-nucleotidase SurE from Paraburkholderia xenovorans (strain LB400).